A 282-amino-acid polypeptide reads, in one-letter code: tRNA (guanine-N(1)-)-methyltransferase (282 aa).

Residues glycine 157 and valine 177–leucine 182 contribute to the S-adenosyl-L-methionine site.

This sequence belongs to the RNA methyltransferase TrmD family. In terms of assembly, homodimer.

The protein localises to the cytoplasm. The enzyme catalyses guanosine(37) in tRNA + S-adenosyl-L-methionine = N(1)-methylguanosine(37) in tRNA + S-adenosyl-L-homocysteine + H(+). Its function is as follows. Specifically methylates guanosine-37 in various tRNAs. The chain is tRNA (guanine-N(1)-)-methyltransferase from Rickettsia bellii (strain RML369-C).